The primary structure comprises 255 residues: Putative expansin-A27 (255 aa).

The first 24 residues, 1–24, serve as a signal peptide directing secretion; it reads MGAMAENLLVLCTILAARMALAAA. Positions 45–160 constitute an Expansin-like EG45 domain; sequence GGACGYGNLY…RRVRCWRRGG (116 aa). Residues 170–249 enclose the Expansin-like CBD domain; sequence HFELVLVANV…GWKFGQTFST (80 aa).

This sequence belongs to the expansin family. Expansin A subfamily.

The protein resides in the secreted. It localises to the cell wall. The protein localises to the membrane. In terms of biological role, may cause loosening and extension of plant cell walls by disrupting non-covalent bonding between cellulose microfibrils and matrix glucans. No enzymatic activity has been found. May be required for rapid internodal elongation in deepwater rice during submergence. In Oryza sativa subsp. japonica (Rice), this protein is Putative expansin-A27 (EXPA27).